The chain runs to 393 residues: Nuclear hormone receptor family member nhr-90 (393 aa).

The segment at residues 6–79 is a DNA-binding region (nuclear receptor); the sequence is LQTCKICGAE…AGMKIEYFQH (74 aa). The NR C4-type zinc-finger motif lies at 9–30; the sequence is CKICGAENTRGNHFGVQCCRAC. Residues 47 to 62 form an NR C4-type; degenerate zinc finger; sequence CLSVHCGEAARFCKPC. Residues 121–388 enclose the NR LBD domain; sequence DLNSLVGKAS…FSHPEMFIDT (268 aa).

This sequence belongs to the nuclear hormone receptor family.

It localises to the nucleus. In terms of biological role, orphan nuclear receptor. The protein is Nuclear hormone receptor family member nhr-90 (nhr-90) of Caenorhabditis elegans.